Reading from the N-terminus, the 238-residue chain is Survival of motor neuron-related-splicing factor 30 (238 aa).

Residues serine 72 to lysine 132 form the Tudor domain. The Nuclear localization signal motif lies at lysine 142 to lysine 160. Serine 201 is subject to Phosphoserine. Lysine 219 is subject to N6-acetyllysine.

It belongs to the SMN family. Associates with spliceosomes. Associates with U4/U5/U6 tri-snRNP and with U2 snRNP. Interacts (via Tudor domain) with SNRPD3 (via C-terminus); the interaction is direct. As to expression, detected at intermediate levels in skeletal muscle, and at low levels in heart and pancreas.

It is found in the nucleus speckle. The protein localises to the nucleus. It localises to the cajal body. In terms of biological role, involved in spliceosome assembly. This chain is Survival of motor neuron-related-splicing factor 30 (SMNDC1), found in Homo sapiens (Human).